Consider the following 127-residue polypeptide: Protein ApaG (127 aa).

Positions 3-127 (NNPSSKIEVA…FVLSVPRTLH (125 aa)) constitute an ApaG domain.

The polypeptide is Protein ApaG (Xylella fastidiosa (strain M23)).